A 444-amino-acid polypeptide reads, in one-letter code: Nuclear envelope integral membrane protein 1 (444 aa).

An N-terminal signal peptide occupies residues Met1–Ala43. N-linked (GlcNAc...) asparagine glycosylation is present at Asn125. The next 5 helical transmembrane spans lie at Pro161–Ser181, Phe186–Ile206, Pro216–Phe236, Cys245–Cys265, and Leu289–Ala309. Residues Phe186 to Gln297 are a; required for its colocalization with lamins at the nuclear envelope. The interval Pro336–Glu405 is b; required for interaction with RAN-GTP. The interval Pro336 to Thr444 is required for nuclear localization. 3 positions are modified to phosphoserine: Ser368, Ser424, and Ser425.

Belongs to the NEMP family. As to quaternary structure, homooligomer. Interacts with RAN-GTP. Interacts with EMD. Post-translationally, phosphorylation may regulate its interaction with RAN-GTP.

It is found in the nucleus inner membrane. Its subcellular location is the nucleus envelope. Together with EMD, contributes to nuclear envelope stiffness in germ cells. Required for female fertility. Essential for normal erythropoiesis. Required for efficient nuclear envelope opening and enucleation during the late stages of erythroblast maturation. The protein is Nuclear envelope integral membrane protein 1 (NEMP1) of Pongo abelii (Sumatran orangutan).